A 30-amino-acid chain; its full sequence is Root cyclotide 1 (30 aa).

A cross-link (cyclopeptide (Gly-Asn)) is located at residues 1 to 30 (GIPCAESCVWIPCTVTALLGCSCSNKVCYN). 3 disulfide bridges follow: C4-C21, C8-C23, and C13-C28.

Post-translationally, this is a cyclic peptide. Expressed in roots.

In terms of biological role, probably participates in a plant defense mechanism. In Viola hederacea (Australian violet), this protein is Root cyclotide 1.